Reading from the N-terminus, the 296-residue chain is Phosphatidylglycerol--prolipoprotein diacylglyceryl transferase (296 aa).

4 helical membrane-spanning segments follow: residues 10–30 (IAFS…LAAF), 57–77 (LLFY…MLFY), 92–112 (VWEG…ACGL), and 119–139 (LHFF…LGFG). An a 1,2-diacyl-sn-glycero-3-phospho-(1'-sn-glycerol)-binding site is contributed by R140. A run of 3 helical transmembrane segments spans residues 194-214 (QLYE…TFSM), 220-240 (YAVS…VEFV), and 255-275 (LTMG…LLAL).

Belongs to the Lgt family.

It localises to the cell inner membrane. It catalyses the reaction L-cysteinyl-[prolipoprotein] + a 1,2-diacyl-sn-glycero-3-phospho-(1'-sn-glycerol) = an S-1,2-diacyl-sn-glyceryl-L-cysteinyl-[prolipoprotein] + sn-glycerol 1-phosphate + H(+). The protein operates within protein modification; lipoprotein biosynthesis (diacylglyceryl transfer). In terms of biological role, catalyzes the transfer of the diacylglyceryl group from phosphatidylglycerol to the sulfhydryl group of the N-terminal cysteine of a prolipoprotein, the first step in the formation of mature lipoproteins. The chain is Phosphatidylglycerol--prolipoprotein diacylglyceryl transferase from Xanthomonas campestris pv. campestris (strain 8004).